A 398-amino-acid chain; its full sequence is S-adenosylmethionine decarboxylase proenzyme (398 aa).

Active-site residues include glutamate 18 and glutamate 21. Serine 78 serves as the catalytic Schiff-base intermediate with substrate; via pyruvic acid. Serine 78 carries the post-translational modification Pyruvic acid (Ser); by autocatalysis. The active-site Proton donor; for catalytic activity is cysteine 92. Active-site proton acceptor; for processing activity residues include serine 243 and histidine 256.

Belongs to the eukaryotic AdoMetDC family. It depends on pyruvate as a cofactor. Post-translationally, is synthesized initially as an inactive proenzyme. Formation of the active enzyme involves a self-maturation process in which the active site pyruvoyl group is generated from an internal serine residue via an autocatalytic post-translational modification. Two non-identical subunits are generated from the proenzyme in this reaction, and the pyruvate is formed at the N-terminus of the alpha chain, which is derived from the carboxyl end of the proenzyme. The post-translation cleavage follows an unusual pathway, termed non-hydrolytic serinolysis, in which the side chain hydroxyl group of the serine supplies its oxygen atom to form the C-terminus of the beta chain, while the remainder of the serine residue undergoes an oxidative deamination to produce ammonia and the pyruvoyl group blocking the N-terminus of the alpha chain.

The enzyme catalyses S-adenosyl-L-methionine + H(+) = S-adenosyl 3-(methylsulfanyl)propylamine + CO2. It functions in the pathway amine and polyamine biosynthesis; S-adenosylmethioninamine biosynthesis; S-adenosylmethioninamine from S-adenosyl-L-methionine: step 1/1. This is S-adenosylmethionine decarboxylase proenzyme (SAMDC) from Oryza sativa subsp. japonica (Rice).